The sequence spans 1320 residues: Junctional cadherin 5-associated protein (1320 aa).

Disordered regions lie at residues 1–124 (MYSV…GSGS), 183–202 (KKPRELGRQASDGDGRKRPQ), 209–233 (YPFVHGEHTSQNRKKSQSLPRALSP), 252–426 (GVPK…SIQY), 452–492 (DDTS…NEQS), 676–720 (ASSP…PTPT), 741–802 (NQKP…STTG), and 835–942 (ELQE…QKSQ). 2 stretches are compositionally biased toward polar residues: residues 58–71 (RTSLGTGHVSNSEN) and 95–107 (NQPSLAWSSQPQS). Residues 108–119 (GRDDIYWSRGRQ) show a composition bias toward basic and acidic residues. Over residues 255-267 (KVPPYPPSFPSPS) the composition is skewed to pro residues. The segment covering 308 to 329 (FQDHQHRDPRGSYPTRSKDPSH) has biased composition (basic and acidic residues). Over residues 338 to 356 (LEPPVYVPPPSYRSPPQHI) the composition is skewed to pro residues. The segment covering 369-378 (VSSNQSQQQV) has biased composition (polar residues). The segment covering 404–415 (GSPPQGLPPQPY) has biased composition (pro residues). Polar residues predominate over residues 454–465 (TSYNPGLLTTQE). Phosphothreonine is present on T484. Phosphoserine is present on S486. A compositionally biased stretch (polar residues) spans 741 to 782 (NQKPSVPHLQGQTSLSPSRNSAFSRTSSAINQASMSKGTSDQ). Residues 849 to 859 (EDSEAEQPEDC) are compositionally biased toward acidic residues. A Phosphoserine modification is found at S851. Over residues 865 to 877 (KSWALQGTRTAQQ) the composition is skewed to polar residues. 2 positions are modified to phosphoserine: S1027 and S1033. 2 disordered regions span residues 1085 to 1116 (ARRTEQSQLPEPDASACNPSSSREDSSHSLAL) and 1153 to 1174 (SDVDGFPTSQATSPEPGKKDEE). 2 positions are modified to phosphoserine: S1245 and S1248. The segment at 1275–1320 (DEAWQAGHLPSVSQNENGHPEVPRDKMSDQDLWCADSYDPSRVERV) is disordered. The segment covering 1292-1303 (GHPEVPRDKMSD) has biased composition (basic and acidic residues).

The protein resides in the cell junction. It localises to the adherens junction. The sequence is that of Junctional cadherin 5-associated protein from Mus musculus (Mouse).